Consider the following 581-residue polypeptide: MGFNVIRLLSGSAVALVIAPTVLLTMLSSAERGCPKGCRCEGKMVYCESQKLQEIPSSISAGCLGLSLRYNSLQKLKYNQFKGLNQLTWLYLDHNHISNIDENAFNGIRRLKELILSSNRISYFLNNTFRPVTNLRNLDLSYNQLHSLGSEQFRGLRKLLSLHLRSNSLRTIPVRIFQDCRNLELLDLGYNRIRSLARNVFAGMIRLKELHLEHNQFSKLNLALFPRLVSLQNLYLQWNKISVIGQTMSWTWSSLQRLDLSGNEIEAFSGPSVFQCVPNLQRLNLDSNKLTFIGQEILDSWISLNDISLAGNIWECSRNICSLVNWLKSFKGLRENTIICASPKELQGVNVIDAVKNYSICGKSTTERFDLARALPKPTFKPKLPRPKHESKPPLPPTVGATEPGPETDADAEHISFHKIIAGSVALFLSVLVILLVIYVSWKRYPASMKQLQQRSLMRRHRKKKRQSLKQMTPSTQEFYVDYKPTNTETSEMLLNGTGPCTYNKSGSRECEIPLSMNVSTFLAYDQPTISYCGVHHELLSHKSFETNAQEDTMETHLETELDLSTITTAGRISDHKQQLA.

Residues 1-30 (MGFNVIRLLSGSAVALVIAPTVLLTMLSSA) form the signal peptide. The LRRNT domain occupies 31–61 (ERGCPKGCRCEGKMVYCESQKLQEIPSSISA). Residues 31–419 (ERGCPKGCRC…ADAEHISFHK (389 aa)) are Extracellular-facing. 10 LRR repeats span residues 63-83 (CLGL…QFKG), 86-107 (QLTW…AFNG), 110-131 (RLKE…TFRP), 134-155 (NLRN…QFRG), 158-179 (KLLS…IFQD), 182-203 (NLEL…VFAG), 206-226 (RLKE…ALFP), 230-251 (SLQN…MSWT), 254-275 (SLQR…SVFQ), and 279-300 (NLQR…ILDS). Asn-126 is a glycosylation site (N-linked (GlcNAc...) asparagine). The 52-residue stretch at 312–363 (NIWECSRNICSLVNWLKSFKGLRENTIICASPKELQGVNVIDAVKNYSICGK) folds into the LRRCT domain. Asn-357 carries an N-linked (GlcNAc...) asparagine glycan. Positions 377-408 (KPTFKPKLPRPKHESKPPLPPTVGATEPGPET) are disordered. A helical membrane pass occupies residues 420-440 (IIAGSVALFLSVLVILLVIYV). Residues 441-581 (SWKRYPASMK…RISDHKQQLA (141 aa)) are Cytoplasmic-facing.

It belongs to the LRRTM family. Expressed in neuronal tissues.

Its subcellular location is the cell membrane. It localises to the postsynaptic cell membrane. Functionally, exhibits a limited synaptogenic activity in vitro, restricted to excitatory presynaptic differentiation. May play a role in the development and maintenance of the vertebrate nervous system. This chain is Leucine-rich repeat transmembrane neuronal protein 3 (LRRTM3), found in Homo sapiens (Human).